The primary structure comprises 243 residues: UPF0758 protein MAE_44350 (243 aa).

The region spanning 113–235 (VIDSPDTAAA…FQSLRQITDL (123 aa)) is the MPN domain. Zn(2+) is bound by residues His184, His186, and Asp197. The JAMM motif signature appears at 184 to 197 (HNHPTGSLVPSQDD).

Belongs to the UPF0758 family.

The sequence is that of UPF0758 protein MAE_44350 from Microcystis aeruginosa (strain NIES-843 / IAM M-2473).